Here is a 273-residue protein sequence, read N- to C-terminus: DNA replication complex GINS protein psf2 (273 aa).

Disordered stretches follow at residues 88–110 (KEDP…SQPG) and 240–273 (ASAE…DMGL). Positions 244-257 (ATRREEEEEARRGG) are enriched in basic and acidic residues. Residues 261–273 (GDGDEDSDEDMGL) are compositionally biased toward acidic residues.

It belongs to the GINS2/PSF2 family. Component of the GINS complex which is a heterotetramer of div-26/sld5, drc-1/psf1, drc-2/psf2 and drc-3/psf3.

It is found in the nucleus. In terms of biological role, the GINS complex plays an essential role in the initiation of DNA replication. Has a role in chromosome segregation. This chain is DNA replication complex GINS protein psf2 (drc-2), found in Neurospora crassa (strain ATCC 24698 / 74-OR23-1A / CBS 708.71 / DSM 1257 / FGSC 987).